We begin with the raw amino-acid sequence, 324 residues long: tRNA uridine(34) hydroxylase (324 aa).

The Rhodanese domain maps to Asn145–Leu239. Cys199 serves as the catalytic Cysteine persulfide intermediate.

The protein belongs to the TrhO family.

It catalyses the reaction uridine(34) in tRNA + AH2 + O2 = 5-hydroxyuridine(34) in tRNA + A + H2O. Catalyzes oxygen-dependent 5-hydroxyuridine (ho5U) modification at position 34 in tRNAs. The sequence is that of tRNA uridine(34) hydroxylase from Buchnera aphidicola subsp. Acyrthosiphon pisum (strain Tuc7).